A 349-amino-acid polypeptide reads, in one-letter code: ATPase GET3 (349 aa).

Residue 26 to 33 (KGGVGKTT) coordinates ATP. Aspartate 57 is an active-site residue. ATP-binding residues include glutamate 240 and asparagine 267. 2 residues coordinate Zn(2+): cysteine 280 and cysteine 283.

Belongs to the arsA ATPase family. In terms of assembly, homodimer. Component of the Golgi to ER traffic (GET) complex, which is composed of GET1, GET2 and GET3. Within the complex, GET1 and GET2 form a heterotetramer which is stabilized by phosphatidylinositol binding and which binds to the GET3 homodimer. Interacts with the chloride channel protein GEF1.

It localises to the cytoplasm. It is found in the endoplasmic reticulum. The protein resides in the golgi apparatus. Functionally, ATPase required for the post-translational delivery of tail-anchored (TA) proteins to the endoplasmic reticulum. Recognizes and selectively binds the transmembrane domain of TA proteins in the cytosol. This complex then targets to the endoplasmic reticulum by membrane-bound receptors GET1 and GET2, where the tail-anchored protein is released for insertion. This process is regulated by ATP binding and hydrolysis. ATP binding drives the homodimer towards the closed dimer state, facilitating recognition of newly synthesized TA membrane proteins. ATP hydrolysis is required for insertion. Subsequently, the homodimer reverts towards the open dimer state, lowering its affinity for the GET1-GET2 receptor, and returning it to the cytosol to initiate a new round of targeting. Cooperates with the HDEL receptor ERD2 to mediate the ATP-dependent retrieval of resident ER proteins that contain a C-terminal H-D-E-L retention signal from the Golgi to the ER. Involved in low-level resistance to the oxyanions arsenite and arsenate, and in heat tolerance. This Kluyveromyces lactis (strain ATCC 8585 / CBS 2359 / DSM 70799 / NBRC 1267 / NRRL Y-1140 / WM37) (Yeast) protein is ATPase GET3.